Here is a 211-residue protein sequence, read N- to C-terminus: tRNA (guanine-N(7)-)-methyltransferase (211 aa).

S-adenosyl-L-methionine is bound by residues Glu-44, Asp-69, Asp-96, and Asp-118. Residue Asp-118 is part of the active site. Residue Lys-122 participates in substrate binding. Positions Lys-124–Arg-129 are interaction with RNA. Substrate is bound by residues Asp-154 and Thr-191–Glu-194.

This sequence belongs to the class I-like SAM-binding methyltransferase superfamily. TrmB family.

It carries out the reaction guanosine(46) in tRNA + S-adenosyl-L-methionine = N(7)-methylguanosine(46) in tRNA + S-adenosyl-L-homocysteine. It functions in the pathway tRNA modification; N(7)-methylguanine-tRNA biosynthesis. Its function is as follows. Catalyzes the formation of N(7)-methylguanine at position 46 (m7G46) in tRNA. The chain is tRNA (guanine-N(7)-)-methyltransferase from Streptococcus pyogenes serotype M12 (strain MGAS2096).